We begin with the raw amino-acid sequence, 503 residues long: ATP synthase subunit alpha (503 aa).

169 to 176 provides a ligand contact to ATP; it reads GDRKTGKT.

Belongs to the ATPase alpha/beta chains family. In terms of assembly, F-type ATPases have 2 components, CF(1) - the catalytic core - and CF(0) - the membrane proton channel. CF(1) has five subunits: alpha(3), beta(3), gamma(1), delta(1), epsilon(1). CF(0) has three main subunits: a(1), b(2) and c(9-12). The alpha and beta chains form an alternating ring which encloses part of the gamma chain. CF(1) is attached to CF(0) by a central stalk formed by the gamma and epsilon chains, while a peripheral stalk is formed by the delta and b chains.

It is found in the cell membrane. The catalysed reaction is ATP + H2O + 4 H(+)(in) = ADP + phosphate + 5 H(+)(out). In terms of biological role, produces ATP from ADP in the presence of a proton gradient across the membrane. The alpha chain is a regulatory subunit. The protein is ATP synthase subunit alpha of Lactobacillus helveticus (strain DPC 4571).